Here is a 99-residue protein sequence, read N- to C-terminus: Transmembrane protein 14A (99 aa).

A run of 3 helical transmembrane segments spans residues 1 to 21 (MDLI…LGYK), 24 to 44 (GGVP…YGAY), and 79 to 99 (PAGL…LLLL).

This sequence belongs to the TMEM14 family.

It is found in the mitochondrion membrane. The protein resides in the endoplasmic reticulum membrane. Its function is as follows. Inhibits apoptosis via negative regulation of the mitochondrial outer membrane permeabilization involved in apoptotic signaling pathway. The polypeptide is Transmembrane protein 14A (Tmem14a) (Mus musculus (Mouse)).